The chain runs to 218 residues: tRNA (guanine-N(7)-)-methyltransferase (218 aa).

Positions 46, 71, 98, and 120 each coordinate S-adenosyl-L-methionine. Asp120 is an active-site residue. Lys124 is a binding site for substrate. Residues Arg126 to Arg131 form an interaction with RNA region. Substrate is bound by residues Asp156 and Thr196–Glu199.

It belongs to the class I-like SAM-binding methyltransferase superfamily. TrmB family.

The enzyme catalyses guanosine(46) in tRNA + S-adenosyl-L-methionine = N(7)-methylguanosine(46) in tRNA + S-adenosyl-L-homocysteine. Its pathway is tRNA modification; N(7)-methylguanine-tRNA biosynthesis. Functionally, catalyzes the formation of N(7)-methylguanine at position 46 (m7G46) in tRNA. This is tRNA (guanine-N(7)-)-methyltransferase from Lactobacillus johnsonii (strain CNCM I-12250 / La1 / NCC 533).